We begin with the raw amino-acid sequence, 280 residues long: Large ribosomal subunit protein uL2 (280 aa).

Disordered stretches follow at residues 1 to 58 (MAIR…GGGH) and 226 to 280 (MNPV…KHGR). Composition is skewed to basic residues over residues 37–58 (LHGHGGRNAHGRITTRHKGGGH) and 268–280 (IVRRRRTGKKHGR).

It belongs to the universal ribosomal protein uL2 family. As to quaternary structure, part of the 50S ribosomal subunit. Forms a bridge to the 30S subunit in the 70S ribosome.

Its function is as follows. One of the primary rRNA binding proteins. Required for association of the 30S and 50S subunits to form the 70S ribosome, for tRNA binding and peptide bond formation. It has been suggested to have peptidyltransferase activity; this is somewhat controversial. Makes several contacts with the 16S rRNA in the 70S ribosome. In Mycobacterium avium (strain 104), this protein is Large ribosomal subunit protein uL2.